The primary structure comprises 214 residues: Large ribosomal subunit protein uL4 (214 aa).

The segment at 43-83 (RRQAGTHKAKSRSEVNRTTKKSIKQKGSGGARHGSRNAPIF) is disordered.

This sequence belongs to the universal ribosomal protein uL4 family. In terms of assembly, part of the 50S ribosomal subunit.

In terms of biological role, one of the primary rRNA binding proteins, this protein initially binds near the 5'-end of the 23S rRNA. It is important during the early stages of 50S assembly. It makes multiple contacts with different domains of the 23S rRNA in the assembled 50S subunit and ribosome. Its function is as follows. Forms part of the polypeptide exit tunnel. The sequence is that of Large ribosomal subunit protein uL4 from Hyphomonas neptunium (strain ATCC 15444).